A 261-amino-acid chain; its full sequence is Peroxiredoxin PRX1, mitochondrial (261 aa).

Residues 1–13 (MFSRICSAQLKRT) constitute a mitochondrion transit peptide. One can recognise a Thioredoxin domain in the interval 49–212 (LRINSDAPNF…VLRVIDALQL (164 aa)). At Ser-53 the chain carries Phosphoserine. Cys-91 (cysteine sulfenic acid (-SOH) intermediate) is an active-site residue.

This sequence belongs to the peroxiredoxin family. Prx6 subfamily. In terms of assembly, homodimer; disulfide-linked.

Its subcellular location is the mitochondrion. It catalyses the reaction a hydroperoxide + 2 glutathione = an alcohol + glutathione disulfide + H2O. The enzyme catalyses [glutaredoxin]-dithiol + a hydroperoxide = [glutaredoxin]-disulfide + an alcohol + H2O. In terms of biological role, thiol-specific peroxidase that catalyzes the reduction of hydrogen peroxide and organic hydroperoxides to water and alcohols, respectively. Plays a role in cell protection against oxidative stress by detoxifying peroxides and as sensor of hydrogen peroxide-mediated signaling events. Involved in mitochondrial protection of cadmium-induced oxidative stress. This Saccharomyces cerevisiae (strain ATCC 204508 / S288c) (Baker's yeast) protein is Peroxiredoxin PRX1, mitochondrial.